We begin with the raw amino-acid sequence, 210 residues long: Glycerol-3-phosphate acyltransferase (210 aa).

A run of 5 helical transmembrane segments spans residues 10–30 (ALIL…GIVI), 59–79 (PAAL…VLIA), 87–107 (AAQL…WLGF), 116–136 (FLGT…LTWL), and 161–181 (LLLG…LIFI).

Belongs to the PlsY family. As to quaternary structure, probably interacts with PlsX.

It is found in the cell inner membrane. The catalysed reaction is an acyl phosphate + sn-glycerol 3-phosphate = a 1-acyl-sn-glycero-3-phosphate + phosphate. Its pathway is lipid metabolism; phospholipid metabolism. In terms of biological role, catalyzes the transfer of an acyl group from acyl-phosphate (acyl-PO(4)) to glycerol-3-phosphate (G3P) to form lysophosphatidic acid (LPA). This enzyme utilizes acyl-phosphate as fatty acyl donor, but not acyl-CoA or acyl-ACP. The protein is Glycerol-3-phosphate acyltransferase of Cereibacter sphaeroides (strain ATCC 17025 / ATH 2.4.3) (Rhodobacter sphaeroides).